A 238-amino-acid polypeptide reads, in one-letter code: Ubiquinone/menaquinone biosynthesis C-methyltransferase UbiE (238 aa).

S-adenosyl-L-methionine is bound by residues Thr62 and Asp82.

This sequence belongs to the class I-like SAM-binding methyltransferase superfamily. MenG/UbiE family.

The enzyme catalyses a 2-demethylmenaquinol + S-adenosyl-L-methionine = a menaquinol + S-adenosyl-L-homocysteine + H(+). It carries out the reaction a 2-methoxy-6-(all-trans-polyprenyl)benzene-1,4-diol + S-adenosyl-L-methionine = a 5-methoxy-2-methyl-3-(all-trans-polyprenyl)benzene-1,4-diol + S-adenosyl-L-homocysteine + H(+). Its pathway is quinol/quinone metabolism; menaquinone biosynthesis; menaquinol from 1,4-dihydroxy-2-naphthoate: step 2/2. It functions in the pathway cofactor biosynthesis; ubiquinone biosynthesis. In terms of biological role, methyltransferase required for the conversion of demethylmenaquinol (DMKH2) to menaquinol (MKH2) and the conversion of 2-polyprenyl-6-methoxy-1,4-benzoquinol (DDMQH2) to 2-polyprenyl-3-methyl-6-methoxy-1,4-benzoquinol (DMQH2). In Wolbachia pipientis wMel, this protein is Ubiquinone/menaquinone biosynthesis C-methyltransferase UbiE.